Here is a 377-residue protein sequence, read N- to C-terminus: Early estrogen-induced gene 1 protein (377 aa).

A C2 NT-type domain is found at 2-145 (AFLTKKKKFK…ILKVNIGMSL (144 aa)). Composition is skewed to polar residues over residues 160–173 (KTVS…SLQM), 188–198 (VRQNRSRQAML), and 222–234 (SRNS…QSKI). The interval 160–313 (KTVSPPGQDS…SVESQPTWVD (154 aa)) is disordered. A compositionally biased stretch (low complexity) spans 256–269 (TSTSSSVSGGLSLT). Basic and acidic residues predominate over residues 274–285 (EPERDVKPEKPP).

Belongs to the EEIG family.

Its subcellular location is the nucleus. It localises to the cytoplasm. In terms of biological role, may be involved in osteoclast differentiation. This chain is Early estrogen-induced gene 1 protein (eeig1), found in Xenopus laevis (African clawed frog).